Reading from the N-terminus, the 497-residue chain is G protein-coupled receptor gprM (497 aa).

The N-linked (GlcNAc...) asparagine glycan is linked to N3. A run of 5 helical transmembrane segments spans residues 66 to 86, 98 to 118, 138 to 158, 179 to 199, and 221 to 241; these read ISVAILPLCIFLLVSYAVLPV, FTLGICFMEASKIAFIIPLGV, CAFTGSLLLLGGWMVVVWSFL, WGALIFGWVVPAVGLTVMLIL, and YWIPIISFAVAALILQLATMA. An N-linked (GlcNAc...) asparagine glycan is attached at N259. A run of 2 helical transmembrane segments spans residues 293–313 and 357–377; these read VTLVLIIIANVIFFSVTFIEL and LLLAVLVLLSLVGFWNFILFA. An N-linked (GlcNAc...) asparagine glycan is attached at N421. The disordered stretch occupies residues 428–497; it reads YKSPSPMVRS…APAVYREYDD (70 aa).

This sequence belongs to the G-protein coupled receptor GPR1/git3 family. As to quaternary structure, interacts with gpaA.

It is found in the cell membrane. Its function is as follows. G protein-coupled receptor that plays a role in conidiation and regulation of the biosynthesis of secondary metabolites such as dihydroxynaphthalene (DHN)-melanin, via interaction with the G-protein complex alpha subunit gpaA. In Aspergillus fumigatus (strain CBS 144.89 / FGSC A1163 / CEA10) (Neosartorya fumigata), this protein is G protein-coupled receptor gprM.